The chain runs to 393 residues: 8-amino-7-oxononanoate synthase (393 aa).

R18 is a substrate binding site. Position 105-106 (105-106 (GY)) interacts with pyridoxal 5'-phosphate. H130 provides a ligand contact to substrate. Pyridoxal 5'-phosphate is bound by residues S178, H206, and T234. K237 bears the N6-(pyridoxal phosphate)lysine mark. T353 serves as a coordination point for substrate.

This sequence belongs to the class-II pyridoxal-phosphate-dependent aminotransferase family. BioF subfamily. As to quaternary structure, homodimer. The cofactor is pyridoxal 5'-phosphate.

The catalysed reaction is 6-carboxyhexanoyl-[ACP] + L-alanine + H(+) = (8S)-8-amino-7-oxononanoate + holo-[ACP] + CO2. It functions in the pathway cofactor biosynthesis; biotin biosynthesis. In terms of biological role, catalyzes the decarboxylative condensation of pimeloyl-[acyl-carrier protein] and L-alanine to produce 8-amino-7-oxononanoate (AON), [acyl-carrier protein], and carbon dioxide. The sequence is that of 8-amino-7-oxononanoate synthase from Geotalea daltonii (strain DSM 22248 / JCM 15807 / FRC-32) (Geobacter daltonii).